The sequence spans 519 residues: Bifunctional purine biosynthesis protein PurH (519 aa).

The MGS-like domain maps to Met-1–Val-147.

Belongs to the PurH family.

It catalyses the reaction (6R)-10-formyltetrahydrofolate + 5-amino-1-(5-phospho-beta-D-ribosyl)imidazole-4-carboxamide = 5-formamido-1-(5-phospho-D-ribosyl)imidazole-4-carboxamide + (6S)-5,6,7,8-tetrahydrofolate. The enzyme catalyses IMP + H2O = 5-formamido-1-(5-phospho-D-ribosyl)imidazole-4-carboxamide. Its pathway is purine metabolism; IMP biosynthesis via de novo pathway; 5-formamido-1-(5-phospho-D-ribosyl)imidazole-4-carboxamide from 5-amino-1-(5-phospho-D-ribosyl)imidazole-4-carboxamide (10-formyl THF route): step 1/1. It functions in the pathway purine metabolism; IMP biosynthesis via de novo pathway; IMP from 5-formamido-1-(5-phospho-D-ribosyl)imidazole-4-carboxamide: step 1/1. The polypeptide is Bifunctional purine biosynthesis protein PurH (Trichlorobacter lovleyi (strain ATCC BAA-1151 / DSM 17278 / SZ) (Geobacter lovleyi)).